Here is a 541-residue protein sequence, read N- to C-terminus: Nuclear receptor subfamily 5 group A member 2 (541 aa).

Residues 1–10 (MSSNSDTGDL) are compositionally biased toward polar residues. The tract at residues 1-35 (MSSNSDTGDLQESLKHGLTPIGAGLPDRHGSPIPA) is disordered. Residues 83 to 154 (EELCPVCGDK…KCLSVGMKLE (72 aa)) constitute a DNA-binding region (nuclear receptor). Positions 86, 89, 103, 106, 122, 128, 138, and 141 each coordinate Zn(2+). 2 consecutive NR C4-type zinc fingers follow at residues 86–106 (CPVC…CESC) and 122–146 (CIEN…FQKC). The tract at residues 152–167 (KLEAVRADRMRGGRNK) is C-terminal extension (CTE). The short motif at 168–187 (FGPMYKRDRALKQQKKALIR) is the FTZ-F1 box element. K270 is covalently cross-linked (Glycyl lysine isopeptide (Lys-Gly) (interchain with G-Cter in SUMO1)). The NR LBD domain maps to 300-539 (SIPHLILELL…NLLIEMLHAK (240 aa)). Residues 421–424 (GATL), Y516, and K520 contribute to the a phospholipid derivative site. Residues 528 to 539 (YNNLLIEMLHAK) are AF-2.

This sequence belongs to the nuclear hormone receptor family. NR5 subfamily. Monomer; Binds DNA as a monomer. Interacts with nuclear receptor corepressors NR0B1 and NR0B2; repressing NR5A2 nuclear receptor activity. Interacts with nuclear receptor coactivators CTNNB1, PPARGC1A and NCOA2; interaction takes place following ligand-binding and promotes target gene activation. Interacts (when sumoylated) with GPS2; interaction with GPS2 onto hepatic acute phase protein promoters prevents N-Cor corepressor complex dissociation. Interacts with HNF1A. Interacts with GRIP1. Post-translationally, sumoylated by SUMO1 at Lys-270 during the hepatic acute phase response, leading to promote interaction with GPS2 and prevent N-Cor corepressor complex dissociation. As to expression, abundantly expressed in pancreas, less in liver, very low levels in heart and lung. Expressed in the Hep-G2 cell line. Isoform 1 and isoform 2 seem to be present in fetal and adult liver and Hep-G2 cells.

Its subcellular location is the nucleus. The protein resides in the chromosome. With respect to regulation, activated by synthetic agonists RR-RJW100, SR-RJW100, endo sulfamide compound 6N and GSK8470. Orphan nuclear receptor that binds DNA as a monomer to the 5'-TCAAGGCCA-3' sequence and controls expression of target genes: regulates key biological processes, such as early embryonic development, cholesterol and bile acid synthesis pathways, as well as liver and pancreas morphogenesis. Ligand-binding causes conformational change which causes recruitment of coactivators, promoting target gene activation. The specific ligand is unknown, but specific phospholipids, such as phosphatidylethanolamine, phosphatidylserine, dilauroyl phosphatidylcholine and diundecanoyl phosphatidylcholine can act as ligand in vitro. Acts as a pioneer transcription factor, which unwraps target DNA from histones and elicits local opening of closed chromatin. Plays a central role during preimplantation stages of embryonic development. Plays a minor role in zygotic genome activation (ZGA) by regulating a small set of two-cell stage genes. Plays a major role in morula development (2-16 cells embryos) by acting as a master regulator at the 8-cell stage, controlling expression of lineage-specifying transcription factors and genes involved in mitosis, telomere maintenance and DNA repair. Zygotic NR5A2 binds to both closed and open chromatin with other transcription factors, often at SINE B1/Alu repeats DNA elements, promoting chromatin accessibility at nearby regulatory regions. Also involved in the epiblast stage of development and embryonic stem cell pluripotency, by promoting expression of POU5F1/OCT4. Regulates other processes later in development, such as formation of connective tissue in lower jaw and middle ear, neural stem cell differentiation, ovarian follicle development and Sertoli cell differentiation. Involved in exocrine pancreas development and acinar cell differentiation. Acts as an essential transcriptional regulator of lipid metabolism. Key regulator of cholesterol 7-alpha-hydroxylase gene (CYP7A) expression in liver. Also acts as a negative regulator of inflammation in different organs, such as, liver and pancreas. Protects against intestinal inflammation via its ability to regulate glucocorticoid production. Plays an anti-inflammatory role during the hepatic acute phase response by acting as a corepressor: inhibits the hepatic acute phase response by preventing dissociation of the N-Cor corepressor complex. Acts as a regulator of immunity by promoting lymphocyte T-cell development, proliferation and effector functions. Also involved in resolution of endoplasmic reticulum stress in the liver. Its function is as follows. In constrast to isoform 1 and isoform 2, does not induce cholesterol 7-alpha-hydroxylase gene (CYP7A) promoter activity. In terms of biological role, (Microbial infection) Plays a crucial role for hepatitis B virus gene transcription and DNA replication. Mechanistically, synergistically cooperates with HNF1A to up-regulate the activity of one of the critical cis-elements in the hepatitis B virus genome enhancer II (ENII). This chain is Nuclear receptor subfamily 5 group A member 2, found in Homo sapiens (Human).